The chain runs to 192 residues: Elongation factor P (192 aa).

Residue lysine 38 is modified to N6-(3,6-diaminohexanoyl)-5-hydroxylysine.

The protein belongs to the elongation factor P family. May be beta-lysylated on the epsilon-amino group of Lys-38 by the combined action of EpmA and EpmB, and then hydroxylated on the C5 position of the same residue by EpmC (if this protein is present). Lysylation is critical for the stimulatory effect of EF-P on peptide-bond formation. The lysylation moiety may extend toward the peptidyltransferase center and stabilize the terminal 3-CCA end of the tRNA. Hydroxylation of the C5 position on Lys-38 may allow additional potential stabilizing hydrogen-bond interactions with the P-tRNA.

The protein localises to the cytoplasm. It functions in the pathway protein biosynthesis; polypeptide chain elongation. In terms of biological role, involved in peptide bond synthesis. Alleviates ribosome stalling that occurs when 3 or more consecutive Pro residues or the sequence PPG is present in a protein, possibly by augmenting the peptidyl transferase activity of the ribosome. Modification of Lys-38 is required for alleviation. The chain is Elongation factor P from Mannheimia succiniciproducens (strain KCTC 0769BP / MBEL55E).